A 98-amino-acid polypeptide reads, in one-letter code: NADH-ubiquinone oxidoreductase chain 4L (98 aa).

3 helical membrane-spanning segments follow: residues 2 to 22 (PSIS…MLIF), 29 to 49 (SLLC…LTIL), and 61 to 81 (ILLL…LVTV).

This sequence belongs to the complex I subunit 4L family. As to quaternary structure, core subunit of respiratory chain NADH dehydrogenase (Complex I) which is composed of 45 different subunits.

It localises to the mitochondrion inner membrane. The enzyme catalyses a ubiquinone + NADH + 5 H(+)(in) = a ubiquinol + NAD(+) + 4 H(+)(out). Its function is as follows. Core subunit of the mitochondrial membrane respiratory chain NADH dehydrogenase (Complex I) which catalyzes electron transfer from NADH through the respiratory chain, using ubiquinone as an electron acceptor. Part of the enzyme membrane arm which is embedded in the lipid bilayer and involved in proton translocation. This is NADH-ubiquinone oxidoreductase chain 4L (MT-ND4L) from Hapalemur aureus (Golden bamboo lemur).